A 389-amino-acid chain; its full sequence is Lipid-A-disaccharide synthase (389 aa).

This sequence belongs to the LpxB family.

The catalysed reaction is a lipid X + a UDP-2-N,3-O-bis[(3R)-3-hydroxyacyl]-alpha-D-glucosamine = a lipid A disaccharide + UDP + H(+). Its pathway is bacterial outer membrane biogenesis; LPS lipid A biosynthesis. Condensation of UDP-2,3-diacylglucosamine and 2,3-diacylglucosamine-1-phosphate to form lipid A disaccharide, a precursor of lipid A, a phosphorylated glycolipid that anchors the lipopolysaccharide to the outer membrane of the cell. The polypeptide is Lipid-A-disaccharide synthase (Paraburkholderia xenovorans (strain LB400)).